A 22-amino-acid chain; its full sequence is uncharacterized protein (22 aa).

The protein belongs to the asfivirus C84L family.

This is an uncharacterized protein from Ornithodoros (relapsing fever ticks).